Here is a 269-residue protein sequence, read N- to C-terminus: Small ribosomal subunit protein uS2 (269 aa).

The segment at 235 to 269 (FDAKNPLKPQNYNTLNKRPYQDSPRKPSYQNQNQR) is disordered.

The protein belongs to the universal ribosomal protein uS2 family.

The chain is Small ribosomal subunit protein uS2 from Aster yellows witches'-broom phytoplasma (strain AYWB).